Here is a 213-residue protein sequence, read N- to C-terminus: ATP-dependent dethiobiotin synthetase BioD (213 aa).

12 to 17 is a binding site for ATP; that stretch reads NVGKTF. Residue Thr-16 participates in Mg(2+) binding. Residue Lys-36 is part of the active site. Ser-40 serves as a coordination point for substrate. Residues Asp-53, 110-113, and 170-171 each bind ATP; these read EGTG and NQ. Mg(2+) is bound by residues Asp-53 and Glu-110.

This sequence belongs to the dethiobiotin synthetase family. In terms of assembly, homodimer. It depends on Mg(2+) as a cofactor.

It is found in the cytoplasm. The catalysed reaction is (7R,8S)-7,8-diammoniononanoate + CO2 + ATP = (4R,5S)-dethiobiotin + ADP + phosphate + 3 H(+). It functions in the pathway cofactor biosynthesis; biotin biosynthesis; biotin from 7,8-diaminononanoate: step 1/2. In terms of biological role, catalyzes a mechanistically unusual reaction, the ATP-dependent insertion of CO2 between the N7 and N8 nitrogen atoms of 7,8-diaminopelargonic acid (DAPA, also called 7,8-diammoniononanoate) to form a ureido ring. This chain is ATP-dependent dethiobiotin synthetase BioD, found in Ruthia magnifica subsp. Calyptogena magnifica.